A 506-amino-acid chain; its full sequence is MSSGNRSEAVDVQKSYEVRTYGCQMNVHDSERLSGLLEGAGYVRAPEGSDGDADVVVFNTCAVRENADNKLYGNLGRLAPMKTKRPGMQIAVGGCLAQKDRDTIVKRAPWVDVVFGTHNIGKLPVLLERARVQEEAQIEIAESLEAFPSTLPTRRESAYAAWVSISVGCNNTCTFCIVPALRGKEKDRRTGDILAEIEALVAEGVCEITLLGQNVNAYGSDIGDREAFSKLLRACGRIEGLERVRFTSPHPRDFTDDVIAAMAETPNVMPQLHMPMQSGSDTVLKAMRRSYRQERFLGIIEKVRAAMPEAAISTDIIVGFPGETEEDFEQTMHAVREARFANAFTFQYSKRPGTPAADMDGQIPKEVVQERYMRLSALQEQISWDENKKQVGRTLDVMVAEGEGRKDGATQRLSGRAPDNRLVHFTQPEKAVRPGDVVTVEITYAAPHHLLAEGTPLAVRSTRAGDAWEKRTTGAAAKPAGVMLGLPGIGAPEPLPAAGAPACGIG.

Residues 14-132 (KSYEVRTYGC…LPVLLERARV (119 aa)) form the MTTase N-terminal domain. [4Fe-4S] cluster is bound by residues Cys23, Cys61, Cys95, Cys169, Cys173, and Cys176. A Radical SAM core domain is found at 155-386 (RESAYAAWVS…ALQEQISWDE (232 aa)). Residues 388–456 (KKQVGRTLDV…PHHLLAEGTP (69 aa)) form the TRAM domain.

It belongs to the methylthiotransferase family. MiaB subfamily. As to quaternary structure, monomer. It depends on [4Fe-4S] cluster as a cofactor.

The protein localises to the cytoplasm. The enzyme catalyses N(6)-dimethylallyladenosine(37) in tRNA + (sulfur carrier)-SH + AH2 + 2 S-adenosyl-L-methionine = 2-methylsulfanyl-N(6)-dimethylallyladenosine(37) in tRNA + (sulfur carrier)-H + 5'-deoxyadenosine + L-methionine + A + S-adenosyl-L-homocysteine + 2 H(+). Catalyzes the methylthiolation of N6-(dimethylallyl)adenosine (i(6)A), leading to the formation of 2-methylthio-N6-(dimethylallyl)adenosine (ms(2)i(6)A) at position 37 in tRNAs that read codons beginning with uridine. This chain is tRNA-2-methylthio-N(6)-dimethylallyladenosine synthase, found in Streptomyces griseus subsp. griseus (strain JCM 4626 / CBS 651.72 / NBRC 13350 / KCC S-0626 / ISP 5235).